Here is a 596-residue protein sequence, read N- to C-terminus: Elongation factor 4 (596 aa).

In terms of domain architecture, tr-type G spans 2–183; the sequence is KNIRNFSIIA…AIVDRIPAPV (182 aa). Residues 14-19 and 130-133 contribute to the GTP site; these read DHGKST and NKID.

Belongs to the TRAFAC class translation factor GTPase superfamily. Classic translation factor GTPase family. LepA subfamily.

It is found in the cell inner membrane. It catalyses the reaction GTP + H2O = GDP + phosphate + H(+). Functionally, required for accurate and efficient protein synthesis under certain stress conditions. May act as a fidelity factor of the translation reaction, by catalyzing a one-codon backward translocation of tRNAs on improperly translocated ribosomes. Back-translocation proceeds from a post-translocation (POST) complex to a pre-translocation (PRE) complex, thus giving elongation factor G a second chance to translocate the tRNAs correctly. Binds to ribosomes in a GTP-dependent manner. The polypeptide is Elongation factor 4 (Sulfurimonas denitrificans (strain ATCC 33889 / DSM 1251) (Thiomicrospira denitrificans (strain ATCC 33889 / DSM 1251))).